We begin with the raw amino-acid sequence, 282 residues long: Bis(5'-nucleosyl)-tetraphosphatase, symmetrical (282 aa).

This sequence belongs to the Ap4A hydrolase family.

It catalyses the reaction P(1),P(4)-bis(5'-adenosyl) tetraphosphate + H2O = 2 ADP + 2 H(+). Hydrolyzes diadenosine 5',5'''-P1,P4-tetraphosphate to yield ADP. The sequence is that of Bis(5'-nucleosyl)-tetraphosphatase, symmetrical from Salmonella arizonae (strain ATCC BAA-731 / CDC346-86 / RSK2980).